A 507-amino-acid polypeptide reads, in one-letter code: Transcription factor CP2 (507 aa).

Residues 61–300 (ENKILPFQYV…SPGFNSSHNS (240 aa)) form the Grh/CP2 DB domain. A DNA-binding region spans residues 133 to 395 (EHQQLEGWRW…LFNALKGRMV (263 aa)). Disordered stretches follow at residues 240 to 268 (PKGA…YQPS) and 296 to 316 (SSHN…QPEP). A compositionally biased stretch (basic and acidic residues) spans 241-265 (KGADRKQKTDREKMEKRTPQEKEKY).

It belongs to the grh/CP2 family. CP2 subfamily. In terms of assembly, component of the SSP (stage selector protein) complex, which appears to be a heteromer of TFCP2 and 2 copies of NFE4.

The protein localises to the nucleus. In terms of biological role, may function as a transcription factor. The sequence is that of Transcription factor CP2 (tfcp2) from Xenopus tropicalis (Western clawed frog).